A 185-amino-acid polypeptide reads, in one-letter code: Pyruvate/ketoisovalerate oxidoreductases common subunit gamma (185 aa).

As to quaternary structure, heterotetramer of one alpha, one beta, one delta and one gamma chain.

It catalyses the reaction 2 oxidized [2Fe-2S]-[ferredoxin] + pyruvate + CoA = 2 reduced [2Fe-2S]-[ferredoxin] + acetyl-CoA + CO2 + H(+). It carries out the reaction 3-methyl-2-oxobutanoate + 2 oxidized [2Fe-2S]-[ferredoxin] + CoA = 2-methylpropanoyl-CoA + 2 reduced [2Fe-2S]-[ferredoxin] + CO2 + H(+). This is Pyruvate/ketoisovalerate oxidoreductases common subunit gamma (porG) from Thermococcus kodakarensis (strain ATCC BAA-918 / JCM 12380 / KOD1) (Pyrococcus kodakaraensis (strain KOD1)).